The sequence spans 294 residues: MKNNKVLVVVGPTAVGKTALGIDLAIKMNGEIISGDSQQVYQGLDIGTAKVTKAEQALAVHHLIDVRKWTENFSVHDFVMEANRLIKEIIERGNVPIIVGGTGLYIQSLIEGYHLGGQKNHQAMMELRETLSALTDEELFEKVLKLNPNFPELNRRRAIRFLELQTFGSTDENSGSDYNFLLIGLNAERKVLYERINQRVEQMMSEGLLAEARTLFEKAPDAQAAKGIGYKEFFPYFSGEISLEDAVELVKRNSRRYAKRQLTWFRNRMEVEFEDVFSETYPDSVFEKVTQFLN.

An ATP-binding site is contributed by 11 to 18 (GPTAVGKT). 13–18 (TAVGKT) contributes to the substrate binding site. The interaction with substrate tRNA stretch occupies residues 36-39 (DSQQ).

The protein belongs to the IPP transferase family. As to quaternary structure, monomer. The cofactor is Mg(2+).

The enzyme catalyses adenosine(37) in tRNA + dimethylallyl diphosphate = N(6)-dimethylallyladenosine(37) in tRNA + diphosphate. In terms of biological role, catalyzes the transfer of a dimethylallyl group onto the adenine at position 37 in tRNAs that read codons beginning with uridine, leading to the formation of N6-(dimethylallyl)adenosine (i(6)A). The sequence is that of tRNA dimethylallyltransferase from Lactococcus lactis subsp. cremoris (strain SK11).